A 207-amino-acid chain; its full sequence is Large ribosomal subunit protein uL4 (207 aa).

A disordered region spans residues 50 to 76 (AVKNRSAVSGGGRKPWKQKGTGRARQG).

This sequence belongs to the universal ribosomal protein uL4 family. As to quaternary structure, part of the 50S ribosomal subunit.

Functionally, one of the primary rRNA binding proteins, this protein initially binds near the 5'-end of the 23S rRNA. It is important during the early stages of 50S assembly. It makes multiple contacts with different domains of the 23S rRNA in the assembled 50S subunit and ribosome. Forms part of the polypeptide exit tunnel. In Macrococcus caseolyticus (strain JCSC5402) (Macrococcoides caseolyticum), this protein is Large ribosomal subunit protein uL4.